The chain runs to 275 residues: Rhamnulose-1-phosphate aldolase (275 aa).

Glutamate 117 is an active-site residue. Zn(2+) contacts are provided by histidine 141, histidine 143, and histidine 212.

This sequence belongs to the aldolase class II family. RhaD subfamily. Homotetramer. The cofactor is Zn(2+).

The protein localises to the cytoplasm. It carries out the reaction L-rhamnulose 1-phosphate = (S)-lactaldehyde + dihydroxyacetone phosphate. It functions in the pathway carbohydrate degradation; L-rhamnose degradation; glycerone phosphate from L-rhamnose: step 3/3. Catalyzes the reversible cleavage of L-rhamnulose-1-phosphate to dihydroxyacetone phosphate (DHAP) and L-lactaldehyde. The protein is Rhamnulose-1-phosphate aldolase of Salmonella dublin (strain CT_02021853).